The primary structure comprises 164 residues: Small ribosomal subunit protein uS5 (164 aa).

One can recognise an S5 DRBM domain in the interval 10–73; it reads LEERVVAINR…EDAKKNLIEV (64 aa).

Belongs to the universal ribosomal protein uS5 family. As to quaternary structure, part of the 30S ribosomal subunit. Contacts proteins S4 and S8.

Functionally, with S4 and S12 plays an important role in translational accuracy. In terms of biological role, located at the back of the 30S subunit body where it stabilizes the conformation of the head with respect to the body. The chain is Small ribosomal subunit protein uS5 from Streptococcus gordonii (strain Challis / ATCC 35105 / BCRC 15272 / CH1 / DL1 / V288).